The sequence spans 353 residues: Uroporphyrinogen decarboxylase (353 aa).

Substrate contacts are provided by residues 29–33 (RQAGR), aspartate 79, tyrosine 156, threonine 211, and histidine 329.

This sequence belongs to the uroporphyrinogen decarboxylase family. Homodimer.

Its subcellular location is the cytoplasm. The enzyme catalyses uroporphyrinogen III + 4 H(+) = coproporphyrinogen III + 4 CO2. It functions in the pathway porphyrin-containing compound metabolism; protoporphyrin-IX biosynthesis; coproporphyrinogen-III from 5-aminolevulinate: step 4/4. Its function is as follows. Catalyzes the decarboxylation of four acetate groups of uroporphyrinogen-III to yield coproporphyrinogen-III. This is Uroporphyrinogen decarboxylase from Alcanivorax borkumensis (strain ATCC 700651 / DSM 11573 / NCIMB 13689 / SK2).